The following is a 226-amino-acid chain: Lipoprotein-releasing system ATP-binding protein LolD (226 aa).

Residues 5-225 (LELVEIERHF…TLKEKKIVEL (221 aa)) form the ABC transporter domain. 41–48 (APSGAGKS) contacts ATP.

It belongs to the ABC transporter superfamily. Lipoprotein translocase (TC 3.A.1.125) family. In terms of assembly, the complex is composed of two ATP-binding proteins (LolD) and two transmembrane proteins (LolC and LolE).

It is found in the cell inner membrane. In terms of biological role, part of the ABC transporter complex LolCDE involved in the translocation of mature outer membrane-directed lipoproteins, from the inner membrane to the periplasmic chaperone, LolA. Responsible for the formation of the LolA-lipoprotein complex in an ATP-dependent manner. This chain is Lipoprotein-releasing system ATP-binding protein LolD, found in Bartonella quintana (strain Toulouse) (Rochalimaea quintana).